Here is a 385-residue protein sequence, read N- to C-terminus: Acetate kinase (385 aa).

N9 provides a ligand contact to Mg(2+). K16 contributes to the ATP binding site. R87 contacts substrate. Catalysis depends on D144, which acts as the Proton donor/acceptor. Residues 202–206 (HLGSG) and 277–279 (DIR) each bind ATP. E373 lines the Mg(2+) pocket.

The protein belongs to the acetokinase family. As to quaternary structure, homodimer. Mg(2+) serves as cofactor. Mn(2+) is required as a cofactor.

The protein localises to the cytoplasm. The enzyme catalyses acetate + ATP = acetyl phosphate + ADP. It participates in metabolic intermediate biosynthesis; acetyl-CoA biosynthesis; acetyl-CoA from acetate: step 1/2. Its function is as follows. Catalyzes the formation of acetyl phosphate from acetate and ATP. Can also catalyze the reverse reaction. This Rickettsia akari (strain Hartford) protein is Acetate kinase.